A 167-amino-acid chain; its full sequence is uncharacterized protein (167 aa).

This is an uncharacterized protein from Xenopus laevis (African clawed frog).